Consider the following 308-residue polypeptide: MDVDTAFLNSTMDEPIYVKQPPGFVNERNPDYVWELYGGMYGLKQAPLLWNEHINNTLKKIGFCRHEGEHGLYFRSTSDGPIYIAVYVDDLLVAAPSPKIYDRVKQELTKLYSMKDLGKVDKFLGLNIHQSSNGDITLSLQDYIAKAASESEINTFKLTQTPLCNSKPLFETTSPHLKDITPYQSIVGQLLFCANTGRPDISYPVSLLSRFLREPRAIHLESARRVLRYLYTTRSMCLKYRSGSQLALTVYCDASHGAIHDLPHSTGGYVTLLAGAPVTWSSKKLKGVIPVPSTEAEYITASETVMEI.

This Saccharomyces cerevisiae (strain ATCC 204508 / S288c) (Baker's yeast) protein is Putative transposon Ty5-1 protein YCL074W (TY5A).